The primary structure comprises 738 residues: Multifunctional procollagen lysine hydroxylase and glycosyltransferase LH3 (738 aa).

The N-terminal stretch at 1-24 (MTSSGPGPRFLLLLPLLLPPAASA) is a signal peptide. Residues 25-290 (SDRPRGRDPV…FCNQDRRTLP (266 aa)) are required for glycosyltransferase activity. 44-46 (VAT) is a UDP binding site. The N-linked (GlcNAc...) asparagine glycan is linked to Asn63. Mn(2+) is bound by residues Asp112, Asp115, and His253. 112–114 (DSY) provides a ligand contact to UDP. 256-259 (GPTK) lines the UDP pocket. Cystine bridges form between Cys279–Cys282 and Cys379–Cys385. The segment at 295-520 (PPRVFLAVFV…EFGRLLATSR (226 aa)) is accessory region. An N-linked (GlcNAc...) asparagine glycan is attached at Asn548. Cys563 and Cys698 are disulfide-bonded. 2-oxoglutarate contacts are provided by Arg599 and Tyr656. The Fe2OG dioxygenase domain occupies 647 to 738 (RAVMNFVVRY…RYIMVSFVDP (92 aa)). The Fe cation site is built by His667 and Asp669. Residues 672 to 715 (TFTLNVALNHKGLDYEGGGCRFLRYDCVISSPRKGWALLHPGRL) are important for dimerization. Asn676 serves as a coordination point for 2-oxoglutarate. A Fe cation-binding site is contributed by His719. Position 729 (Arg729) interacts with 2-oxoglutarate.

As to quaternary structure, homodimer. It depends on Fe(2+) as a cofactor. L-ascorbate is required as a cofactor. Mn(2+) serves as cofactor.

The protein localises to the rough endoplasmic reticulum. It is found in the endoplasmic reticulum lumen. Its subcellular location is the endoplasmic reticulum membrane. It localises to the secreted. The protein resides in the extracellular space. The enzyme catalyses L-lysyl-[collagen] + 2-oxoglutarate + O2 = (5R)-5-hydroxy-L-lysyl-[collagen] + succinate + CO2. It catalyses the reaction (5R)-5-hydroxy-L-lysyl-[collagen] + UDP-alpha-D-galactose = (5R)-5-O-(beta-D-galactosyl)-5-hydroxy-L-lysyl-[collagen] + UDP + H(+). It carries out the reaction (5R)-5-O-(beta-D-galactosyl)-5-hydroxy-L-lysyl-[collagen] + UDP-alpha-D-glucose = (5R)-5-O-[alpha-D-glucosyl-(1-&gt;2)-beta-D-galactosyl]-5-hydroxy-L-lysyl-[collagen] + UDP + H(+). Multifunctional enzyme that catalyzes a series of post-translational modifications on Lys residues in procollagen. Plays a redundant role in catalyzing the formation of hydroxylysine residues in -Xaa-Lys-Gly- sequences in collagens. Plays a redundant role in catalyzing the transfer of galactose onto hydroxylysine groups, giving rise to galactosyl 5-hydroxylysine. Has an essential role by catalyzing the subsequent transfer of glucose moieties, giving rise to 1,2-glucosylgalactosyl-5-hydroxylysine residues. Catalyzes hydroxylation and glycosylation of Lys residues in the MBL1 collagen-like domain, giving rise to hydroxylysine and 1,2-glucosylgalactosyl-5-hydroxylysine residues. Catalyzes hydroxylation and glycosylation of Lys residues in the ADIPOQ collagen-like domain, giving rise to hydroxylysine and 1,2-glucosylgalactosyl-5-hydroxylysine residues. Essential for normal biosynthesis and secretion of type IV collagens. Essential for normal formation of basement membranes. The protein is Multifunctional procollagen lysine hydroxylase and glycosyltransferase LH3 (PLOD3) of Pongo abelii (Sumatran orangutan).